The following is a 579-amino-acid chain: UvrABC system protein C (579 aa).

The GIY-YIG domain occupies 12-89; it reads DATGVYIFRD…IKRYRPPYNV (78 aa). Residues 193–228 form the UVR domain; it reads QEVIEVLEEEMKEASERLEFERAARIRDQIESIREV.

Belongs to the UvrC family. Interacts with UvrB in an incision complex.

It localises to the cytoplasm. The UvrABC repair system catalyzes the recognition and processing of DNA lesions. UvrC both incises the 5' and 3' sides of the lesion. The N-terminal half is responsible for the 3' incision and the C-terminal half is responsible for the 5' incision. The polypeptide is UvrABC system protein C (Methanothermobacter thermautotrophicus (strain ATCC 29096 / DSM 1053 / JCM 10044 / NBRC 100330 / Delta H) (Methanobacterium thermoautotrophicum)).